The primary structure comprises 235 residues: ATP synthase subunit a (235 aa).

5 helical membrane passes run 17–37, 76–96, 113–133, 179–201, and 211–230; these read TTNIVSGLIIYAIVFFTLYGM, SFFAFVLFVFIFFANQFGLIF, PVVTLTLSLMVMVLAFAAGVA, LLMSLIANMAFSHGILTIIPGLF, and VFIGSIQAYVFVTLTTVYIS.

The protein belongs to the ATPase A chain family. In terms of assembly, F-type ATPases have 2 components, CF(1) - the catalytic core - and CF(0) - the membrane proton channel. CF(1) has five subunits: alpha(3), beta(3), gamma(1), delta(1), epsilon(1). CF(0) has three main subunits: a(1), b(2) and c(9-12). The alpha and beta chains form an alternating ring which encloses part of the gamma chain. CF(1) is attached to CF(0) by a central stalk formed by the gamma and epsilon chains, while a peripheral stalk is formed by the delta and b chains.

It is found in the cell membrane. Functionally, key component of the proton channel; it plays a direct role in the translocation of protons across the membrane. The chain is ATP synthase subunit a from Limosilactobacillus reuteri subsp. reuteri (strain JCM 1112) (Lactobacillus reuteri).